Here is a 213-residue protein sequence, read N- to C-terminus: Ferric nitrobindin-like protein (213 aa).

Residues 17–42 (VNLAAEQSKSTSDKNLPEFGDMPIPD) form a disordered region. The GXWXGXG signature appears at 65-71 (GVWRGQG).

It belongs to the nitrobindin family.

This is Ferric nitrobindin-like protein from Corynebacterium jeikeium (strain K411).